We begin with the raw amino-acid sequence, 599 residues long: Stromal 70 kDa heat shock-related protein, chloroplastic (599 aa).

The interval 545-573 (NQPGAGGEPGAAQAQHQEQSSARQIQRAK) is disordered. The span at 554 to 568 (GAAQAQHQEQSSARQ) shows a compositional bias: low complexity.

The protein belongs to the heat shock protein 70 family.

The protein resides in the plastid. It is found in the chloroplast stroma. Its function is as follows. Interacts with newly imported chloroplast proteins to assist in their maturation. The sequence is that of Stromal 70 kDa heat shock-related protein, chloroplastic (CHSP70) from Spinacia oleracea (Spinach).